The following is a 394-amino-acid chain: Penicillopepsin-2 (394 aa).

The signal sequence occupies residues 1–20 (MVVFSKITVVLAGLATVASA). Residues 21–71 (VPTGTSRKSTFTVNQKARPVAQAKAINLPGMYASALSKYGAAVPASVKAAA) constitute a propeptide, activation peptide. Residues 87–391 (YLTPVNVGGT…DANGPRLGFA (305 aa)) enclose the Peptidase A1 domain. Asp-103 is a catalytic residue. N-linked (GlcNAc...) asparagine glycosylation occurs at Asn-132. Asp-283 is a catalytic residue. Cys-319 and Cys-354 are joined by a disulfide.

The protein belongs to the peptidase A1 family. Monomer.

The protein resides in the secreted. The enzyme catalyses Hydrolysis of proteins with broad specificity similar to that of pepsin A, preferring hydrophobic residues at P1 and P1', but also cleaving 20-Gly-|-Glu-21 in the B chain of insulin. Clots milk, and activates trypsinogen.. Its function is as follows. Secreted aspartic endopeptidase that allows assimilation of proteinaceous substrates. The scissile peptide bond is attacked by a nucleophilic water molecule activated by two aspartic residues in the active site. Shows a broad primary substrate specificity. Favors hydrophobic residues at the P1 and P1' positions, but can also activate trypsinogen and hydrolyze the B chain of insulin between positions 'Gly-20' and 'Glu-21'. In Penicillium janthinellum (Penicillium vitale), this protein is Penicillopepsin-2.